The following is a 189-amino-acid chain: Movement protein p22 (189 aa).

This sequence belongs to the tombusvirus/aureusvirus movement protein p22 family. Interacts with host protein HFI22. Phosphorylated.

Its subcellular location is the host membrane. Cell-to-cell movement. Displays RNA-binding activity. The chain is Movement protein p22 from Capsicum annuum (Capsicum pepper).